We begin with the raw amino-acid sequence, 252 residues long: Imidazole glycerol phosphate synthase subunit HisF (252 aa).

Active-site residues include Asp-11 and Asp-130.

Belongs to the HisA/HisF family. In terms of assembly, heterodimer of HisH and HisF.

The protein resides in the cytoplasm. It carries out the reaction 5-[(5-phospho-1-deoxy-D-ribulos-1-ylimino)methylamino]-1-(5-phospho-beta-D-ribosyl)imidazole-4-carboxamide + L-glutamine = D-erythro-1-(imidazol-4-yl)glycerol 3-phosphate + 5-amino-1-(5-phospho-beta-D-ribosyl)imidazole-4-carboxamide + L-glutamate + H(+). It participates in amino-acid biosynthesis; L-histidine biosynthesis; L-histidine from 5-phospho-alpha-D-ribose 1-diphosphate: step 5/9. IGPS catalyzes the conversion of PRFAR and glutamine to IGP, AICAR and glutamate. The HisF subunit catalyzes the cyclization activity that produces IGP and AICAR from PRFAR using the ammonia provided by the HisH subunit. The protein is Imidazole glycerol phosphate synthase subunit HisF of Alkaliphilus metalliredigens (strain QYMF).